A 364-amino-acid chain; its full sequence is Fructose-bisphosphate aldolase B (364 aa).

N-acetylalanine is present on Ala-2. The residue at position 13 (Lys-13) is an N6-succinyllysine. Position 36 is a phosphoserine (Ser-36). A Phosphothreonine modification is found at Thr-39. Residue Arg-43 coordinates beta-D-fructose 1,6-bisphosphate. Ser-89 bears the Phosphoserine mark. Thr-119 carries the phosphothreonine modification. Lys-121 carries the post-translational modification N6-succinyllysine. Residue Ser-132 is modified to Phosphoserine. The Proton acceptor role is filled by Glu-188. Lys-230 functions as the Schiff-base intermediate with dihydroxyacetone-P in the catalytic mechanism. Residues Ser-272, Ser-276, Ser-299, and Ser-301 each carry the phosphoserine modification. Residue 272–274 (SGG) coordinates beta-D-fructose 1,6-bisphosphate. Arg-304 contacts beta-D-fructose 1,6-bisphosphate. Ser-309 carries the post-translational modification Phosphoserine. Lys-317 is modified (N6-succinyllysine).

The protein belongs to the class I fructose-bisphosphate aldolase family. In terms of assembly, homotetramer. Interacts with BBS1, BBS2, BBS4 and BBS7. Forms a ternary complex with G6PD and TP53; this interaction is direct.

It is found in the cytoplasm. It localises to the cytosol. The protein localises to the cytoskeleton. The protein resides in the microtubule organizing center. Its subcellular location is the centrosome. It is found in the centriolar satellite. The enzyme catalyses beta-D-fructose 1,6-bisphosphate = D-glyceraldehyde 3-phosphate + dihydroxyacetone phosphate. It carries out the reaction beta-D-fructose 1-phosphate = D-glyceraldehyde + dihydroxyacetone phosphate. The protein operates within carbohydrate degradation; glycolysis; D-glyceraldehyde 3-phosphate and glycerone phosphate from D-glucose: step 4/4. Its pathway is carbohydrate biosynthesis; gluconeogenesis. It participates in carbohydrate metabolism; fructose metabolism. Its function is as follows. Catalyzes the aldol cleavage of fructose 1,6-biphosphate to form two triosephosphates dihydroxyacetone phosphate and D-glyceraldehyde 3-phosphate in glycolysis as well as the reverse stereospecific aldol addition reaction in gluconeogenesis. In fructolysis, metabolizes fructose 1-phosphate derived from the phosphorylation of dietary fructose by fructokinase into dihydroxyacetone phosphate and D-glyceraldehyde. Acts as an adapter independently of its enzymatic activity, exerts a tumor suppressor role by stabilizing the ternary complex with G6PD and TP53 to inhibit G6PD activity and keep oxidative pentose phosphate metabolism in check. This is Fructose-bisphosphate aldolase B (Aldob) from Rattus norvegicus (Rat).